A 223-amino-acid chain; its full sequence is MTWSRRQFLTGVGVLAAVSGTAGRVVAKTLNINGVRYGMVHDESLCIGCTACMDACREVNKVPEGVSRLTIIRSEPQGEFPDVKYRFFRKSCQHCDHAPCVDVCPTGASFRDAASGIVDVNPDLCVGCQYCIAACPYRVRFIHPVTKTADKCDFCRKTNLQAGKLPACVEACPTKALTFGNLDDPNSEISQLLRQKPTYRYKLALGTKPKLYRVPFKYGEVSQ.

Residues 1–27 (MTWSRRQFLTGVGVLAAVSGTAGRVVA) constitute a signal peptide (tat-type signal). 4Fe-4S ferredoxin-type domains follow at residues 37–65 (YGMVHDESLCIGCTACMDACREVNKVPEG), 83–114 (VKYRFFRKSCQHCDHAPCVDVCPTGASFRDAA), and 116–145 (GIVDVNPDLCVGCQYCIAACPYRVRFIHPV). [4Fe-4S] cluster is bound by residues Cys-46, Cys-49, Cys-52, Cys-56, Cys-92, Cys-95, Cys-100, Cys-104, Cys-125, Cys-128, Cys-131, Cys-135, Cys-152, Cys-155, Cys-168, and Cys-172.

In terms of processing, predicted to be exported by the Tat system. The position of the signal peptide cleavage has not been experimentally proven.

Probably involved in the transfer of electrons from the quinone pool to the type-c cytochromes. The chain is Protein NrfC (nrfC) from Escherichia coli O157:H7.